The sequence spans 178 residues: Hypoxanthine phosphoribosyltransferase (178 aa).

The diphosphate site is built by R43 and G44. E99 serves as a coordination point for GMP. An IMP-binding site is contributed by E99. Mg(2+) is bound by residues E99 and D100. Residue D103 is the Proton acceptor of the active site. Residues 103–108, K131, and D159 contribute to the GMP site; that span reads DSGNTL. IMP is bound by residues 103–108 and K131; that span reads DSGNTL. R165 is a diphosphate binding site.

It belongs to the purine/pyrimidine phosphoribosyltransferase family. Homotetramer. Requires Mg(2+) as cofactor.

It is found in the cytoplasm. It catalyses the reaction IMP + diphosphate = hypoxanthine + 5-phospho-alpha-D-ribose 1-diphosphate. It carries out the reaction GMP + diphosphate = guanine + 5-phospho-alpha-D-ribose 1-diphosphate. Its pathway is purine metabolism; IMP biosynthesis via salvage pathway; IMP from hypoxanthine: step 1/1. Its function is as follows. Purine salvage pathway enzyme which catalyzes the transfer of the ribosyl-5-phosphate group from 5-phospho-alpha-D-ribose 1-diphosphate (PRPP) to the N9 position of hypoxanthine to yield IMP (inosine 5'-monophosphate). To a lesser extent, can also act on guanine leading to GMP, but shows a highly less efficient activity with xanthine. In Salmonella typhimurium (strain LT2 / SGSC1412 / ATCC 700720), this protein is Hypoxanthine phosphoribosyltransferase (hpt).